We begin with the raw amino-acid sequence, 500 residues long: Protein PIGMENT DEFECTIVE 338, chloroplastic (500 aa).

The N-terminal 63 residues, 1-63 (MQTLLCQPCK…FAFRGFSICR (63 aa)), are a transit peptide targeting the chloroplast. S1 motif domains lie at 156-265 (KPGD…LSSR), 283-351 (NEPI…LSEK), and 362-431 (GTLL…LSIA).

Belongs to the bacterial ribosomal protein bS1 family. Interacts with CRP1 and PRFB3. Present in leaves (at protein level). Confined to leaf chlorenchyma cells.

Its subcellular location is the plastid. It localises to the chloroplast. Functionally, RNA-binding protein that acts as an RNA chaperone to remodel RNA structure and activates their translation. Required for seed pigmentation. Necessary for chloroplast development and subsequent photosynthetic electron flow, as well as for non-photochemical quenching (NPQ). Rubisco regulatory factor which regulates the concerted biogenesis of NDH, PSI (including PsaA, PsaB, PsaD, PsaF, PsaL, PsaG, PsaK and NdhH) and Cytb(6)f (including PetA, PetB, PetC and PetD) complexes. Binds specifically to and involved in the post-transcriptional regulation of plastid-encoded mRNAs (e.g. rbcL, petA, petB, petD and Ycf1), thus modulating expression, cellular localization/compartmentalization, and photosynthetic function. This Arabidopsis thaliana (Mouse-ear cress) protein is Protein PIGMENT DEFECTIVE 338, chloroplastic.